The primary structure comprises 763 residues: Cadherin-like protein 26 (763 aa).

Positions 1-20 (MDTRGCAWLLLLLSLPQGQS) are cleaved as a signal peptide. Cadherin domains lie at 21–140 (HQPL…APQF), 141–250 (PEKE…MPTF), 251–371 (MEDR…PPAF), and 370–478 (AFHP…APTL). Topologically, residues 21–590 (HQPLHRSKRR…SECEEPSDTW (570 aa)) are extracellular. Asparagine 56, asparagine 60, and asparagine 146 each carry an N-linked (GlcNAc...) asparagine glycan. Asparagine 394 and asparagine 440 each carry an N-linked (GlcNAc...) asparagine glycan. The chain crosses the membrane as a helical span at residues 591–611 (LLWWALSPVGAALMVLSAALL). At 612-763 (CLLRCSCTFG…AMCFTSRVPS (152 aa)) the chain is on the cytoplasmic side.

In terms of assembly, homodimer. Component of a cadherin:catenin adhesion complex composed of at least of CDH26, beta-catenin/CTNNB1, alpha-catenin/CTNNA1 and p120 catenin/CTNND1. In terms of processing, N-glycosylated.

It is found in the cell membrane. Functionally, cadherins are calcium-dependent cell adhesion proteins. They preferentially interact with themselves in a homophilic manner in connecting cells; cadherins may thus contribute to the sorting of heterogeneous cell types. Ligand for integrins alpha-E/beta-7, ITGAE:ITGAB7, alpha-4/beta-7, ITGA4:ITGAB7 and alpha-4/beta-1, ITGA4:ITGAB1 through which modulates CD4(+) T cells activation. This chain is Cadherin-like protein 26 (Cdh26), found in Mus musculus (Mouse).